The following is a 307-amino-acid chain: CRISPR-associated endonuclease Cas1 2 (307 aa).

Mn(2+) is bound by residues Glu-142, His-206, and Glu-221.

The protein belongs to the CRISPR-associated endonuclease Cas1 family. In terms of assembly, homodimer, forms a heterotetramer with a Cas2 homodimer. Forms oligomers, probably binds nucleic acids as a homodimer. The cofactor is Mg(2+). Requires Mn(2+) as cofactor.

Functionally, CRISPR (clustered regularly interspaced short palindromic repeat), is an adaptive immune system that provides protection against mobile genetic elements (viruses, transposable elements and conjugative plasmids). CRISPR clusters contain spacers, sequences complementary to antecedent mobile elements, and target invading nucleic acids. CRISPR clusters are transcribed and processed into CRISPR RNA (crRNA). Acts as a dsDNA endonuclease. Involved in the integration of spacer DNA into the CRISPR cassette. In terms of biological role, in vitro catalyzes a concerted transesterification reaction on branched DNA, as would be expected during integration of protospacers into the CRISPR leader sequence; Cas2 is not required in vitro. This reaction requires a 3'-OH group at the branch point. Binds ss- and dsDNA and ss- and dsRNA with approximately equal affinity. May be able to anneal complementary DNA strands. This is CRISPR-associated endonuclease Cas1 2 from Saccharolobus solfataricus (strain ATCC 35092 / DSM 1617 / JCM 11322 / P2) (Sulfolobus solfataricus).